The primary structure comprises 656 residues: MQVPESSLAHLSEWQRDAFVLSSGTCLPQQKAEVYRAHLAQIQYAWANSEISEASAVHLFKKYAEKYSAIIDSDKLEIGLNNYADSILTLAKCQRNESDKWQSSLTTNNVLKLKSVQDMAVAGRRTQLSKSSADASVRVGNGINTSGYSAGLGNNVLRNSGYTVPHAALSDCQMPGGSANFLQKPKISAFTIANTTSVANTSSNTLINNSISMTSSLMQSNEDKDPASFSGHMFLPTTSVHSGKRKAYSALGNESSDIKPNPLVQRQLTNKEATCESGFKTAKEQLWVDQQKKYSNQPQRNPSPLYGGAKKSLGAARSRGLHGKFVPPVPRQEDVQDSNRKVYGQGNSEMNAPSDERLKNIEPKMIELIMSEIMDHGPPLNWDDIAGLEFAKTTIKEIVVWPMLRPDIFTGLRGPPKGILLFGPPGTGKTLIGKCIACQSGATFFSISASSLTSKWVGEGEKMVRALFTVARCHQPAVIFIDEIDSLLSQRGEGEHESSRRIKTEFLVQLDGATTSSDDRILVVGATNRPQEIDEAARRRLVKRLYIPLPEASARKQIVVSLMAKEHCSLAEQEVEAIVLQADGFSGADMTQLCREAALGPIRSIQLMDISTITPEQVRPIAYIDFQSAFLVVRPSVSQKDLELYENWNKTFGCGR.

Positions Lys-293–Pro-302 are enriched in polar residues. Positions Lys-293 to Ser-354 are disordered. Residues Arg-331–Arg-340 are compositionally biased toward basic and acidic residues. Residues Ala-386 and Gly-426–Leu-431 each bind ATP.

The protein belongs to the AAA ATPase family. In terms of assembly, hexamer. The cofactor is Mg(2+).

The protein localises to the nucleus. Its subcellular location is the cytoplasm. It localises to the perinuclear region. The enzyme catalyses ATP + H2O = ADP + phosphate + H(+). May be involved in DNA double-strand break (DBS) repair via homologous recombination (HR). May regulate osteoblast proliferation and differentiation. The polypeptide is Fidgetin-like protein 1 (fignl1) (Xenopus tropicalis (Western clawed frog)).